The sequence spans 404 residues: MNRVYSVSDINNYIKQLVSNDIILSDVSIRGEISNFKHHYTGHMYFTIKDKNSLLKCVMFRSQAVSLRFSPENGMKVIVSGYISVFERDGQYQLYASSMQPDGVGALHIAFEQLKEKLQREGLFDPENKKKIPVLPGSIGVVTSSTGAVIRDIINVTYRRNSKMKLVLYPVAVQGQQAAGQIAEAIKCLNEQNKVDVIIVARGGGSLEELWAFNEEIVARSIYASNIPVISAVGHETDFTICDFVSDMRAPTPSAAAELAVPDMEVLLYKLESYNMRMKSSLAKKVTTLKNQLQKLNARPFFAQPYDRVNQQRQTLDNLTKSMVRENQTIIKDKKSQFGMLAGKLDALSPLKILERGYSLVKNPQGYVVNNVKQINIGDKLEILMNDGLAECDVISVREGKIYE.

The protein belongs to the XseA family. Heterooligomer composed of large and small subunits.

Its subcellular location is the cytoplasm. The enzyme catalyses Exonucleolytic cleavage in either 5'- to 3'- or 3'- to 5'-direction to yield nucleoside 5'-phosphates.. Its function is as follows. Bidirectionally degrades single-stranded DNA into large acid-insoluble oligonucleotides, which are then degraded further into small acid-soluble oligonucleotides. The protein is Exodeoxyribonuclease 7 large subunit of Ruminiclostridium cellulolyticum (strain ATCC 35319 / DSM 5812 / JCM 6584 / H10) (Clostridium cellulolyticum).